The chain runs to 261 residues: Claudin-18 (261 aa).

At 1 to 6 the chain is on the cytoplasmic side; sequence MSTTRC. A helical transmembrane segment spans residues 7 to 27; that stretch reads QVVGFLLSILGLAGCIVATEM. Residues 28-80 lie on the Extracellular side of the membrane; sequence DMWSTQDLYDNPVTAVFQYEGLWRSCVQQSSGFTECRPYLTILGLPAMLQAVR. A helical transmembrane segment spans residues 81–101; the sequence is ALMIVGIVLSVIGLLVAIFAL. Topologically, residues 102-122 are cytoplasmic; sequence KCIRMGNMDDSAKAKMTLTSG. The helical transmembrane segment at 123-143 threads the bilayer; the sequence is IMFIIAGLCAIAGVSVFANML. At 144–174 the chain is on the extracellular side; sequence VTNFWMSTASMFTSMGGMVQTVQTRYTFGAA. The chain crosses the membrane as a helical span at residues 175-195; that stretch reads LFVGWVAGGLTLIGGVLMCIA. Positions 195–261 are required for role in regulation of RANKL-induced osteoclast differentiation; the sequence is ACRGLAPEET…QSPPSKYDYV (67 aa). At 196–261 the chain is on the cytoplasmic side; it reads CRGLAPEETN…QSPPSKYDYV (66 aa). Ser-214 carries the post-translational modification Phosphoserine. The interval 228–261 is disordered; it reads SSGFESNTRNKKIYDGGARTEDEGQSPPSKYDYV. A compositionally biased stretch (basic and acidic residues) spans 239–249; sequence KIYDGGARTED.

Belongs to the claudin family. Interacts with TJP2/ZO-2. Interacts with TJP1/ZO-1. Interacts with YAP1 (phosphorylated); the interaction sequesters YAP1 away from the nucleus and thereby restricts transcription of YAP1 target genes. Interacts with CLDN19.

It is found in the cell junction. The protein localises to the tight junction. It localises to the cell membrane. In terms of biological role, involved in alveolar fluid homeostasis via regulation of alveolar epithelial tight junction composition and therefore ion transport and solute permeability, potentially via downstream regulation of the actin cytoskeleton organization and beta-2-adrenergic signaling. Required for lung alveolarization and maintenance of the paracellular alveolar epithelial barrier. Acts to maintain epithelial progenitor cell proliferation and organ size, via regulation of YAP1 localization away from the nucleus and thereby restriction of YAP1 target gene transcription. Acts as a negative regulator of RANKL-induced osteoclast differentiation, potentially via relocation of TJP2/ZO-2 away from the nucleus, subsequently involved in bone resorption in response to calcium deficiency. Mediates the osteoprotective effects of estrogen, potentially via acting downstream of estrogen signaling independently of RANKL signaling pathways. The sequence is that of Claudin-18 (CLDN18) from Bos taurus (Bovine).